We begin with the raw amino-acid sequence, 128 residues long: Cystatin-12 (128 aa).

A signal peptide spans 1–21 (MLWKSVLSVALIVLGIHDCSF). Intrachain disulfides connect cysteine 82/cysteine 92 and cysteine 105/cysteine 125. Residue asparagine 122 is glycosylated (N-linked (GlcNAc...) asparagine).

The protein belongs to the cystatin family. As to expression, located at the very proximal caput epididymis (at protein level). Expressed in epididymis, Sertoli cells and testis. Also found to be weakly expressed in ovary and prostate.

Its subcellular location is the secreted. Functionally, may play a specialized role in spermatogenesis. The protein is Cystatin-12 (Cst12) of Mus musculus (Mouse).